Consider the following 199-residue polypeptide: Dephospho-CoA kinase (199 aa).

The DPCK domain occupies 3-199; it reads ILGLTGSIGM…ATAKMPQRRA (197 aa). ATP is bound at residue 11–16; it reads GMGKST.

It belongs to the CoaE family.

The protein resides in the cytoplasm. The catalysed reaction is 3'-dephospho-CoA + ATP = ADP + CoA + H(+). The protein operates within cofactor biosynthesis; coenzyme A biosynthesis; CoA from (R)-pantothenate: step 5/5. Catalyzes the phosphorylation of the 3'-hydroxyl group of dephosphocoenzyme A to form coenzyme A. This chain is Dephospho-CoA kinase, found in Rhodopseudomonas palustris (strain BisB18).